A 370-amino-acid polypeptide reads, in one-letter code: Heme A synthase (370 aa).

8 helical membrane passes run valine 15–alanine 35, valine 104–proline 124, alanine 129–alanine 149, valine 161–leucine 181, alanine 200–leucine 220, glutamine 261–isoleucine 280, glycine 293–leucine 313, and proline 317–leucine 337. Position 264 (histidine 264) interacts with heme. Histidine 324 is a heme binding site.

The protein belongs to the COX15/CtaA family. Type 2 subfamily. In terms of assembly, interacts with CtaB. Heme b is required as a cofactor.

The protein localises to the cell membrane. The enzyme catalyses Fe(II)-heme o + 2 A + H2O = Fe(II)-heme a + 2 AH2. The protein operates within porphyrin-containing compound metabolism; heme A biosynthesis; heme A from heme O: step 1/1. In terms of biological role, catalyzes the conversion of heme O to heme A by two successive hydroxylations of the methyl group at C8. The first hydroxylation forms heme I, the second hydroxylation results in an unstable dihydroxymethyl group, which spontaneously dehydrates, resulting in the formyl group of heme A. The protein is Heme A synthase of Rhodopseudomonas palustris (strain TIE-1).